The sequence spans 624 residues: (-)-beta-phellandrene synthase 4, chloroplastic (624 aa).

The transit peptide at 1 to 48 (MAIVSSVPLASKSCLHKSLISSIHKLKPFCRTIPTLGMSRPGKSVMPS) directs the protein to the chloroplast. Residues 41–60 (PGKSVMPSMSMSSPVSDDGV) form a disordered region. Residues 44 to 56 (SVMPSMSMSSPVS) are compositionally biased toward low complexity. Residues Asp-375, Asp-379, and Asp-527 each coordinate Mg(2+). A DDXXD motif motif is present at residues 375-379 (DDMYD).

Belongs to the terpene synthase family. Tpsd subfamily. The cofactor is Mg(2+). Requires Mn(2+) as cofactor.

The protein resides in the plastid. Its subcellular location is the chloroplast. It carries out the reaction (2E)-geranyl diphosphate = (-)-beta-phellandrene + diphosphate. It participates in terpene metabolism; oleoresin biosynthesis. In terms of biological role, terpene synthase (TPS) involved in the biosynthesis of monoterpene natural products included in conifer oleoresin secretions and volatile emissions; these compounds contribute to biotic and abiotic stress defense against herbivores and pathogens. Catalyzes the conversion of (2E)-geranyl diphosphate (GPP) to (-)-beta-phellandrene. The chain is (-)-beta-phellandrene synthase 4, chloroplastic from Picea sitchensis (Sitka spruce).